The chain runs to 456 residues: Equilibrative nucleoside transporter 2 (456 aa).

Residues 13-33 (LVGISFFILGLGTLLPWNFFI) traverse the membrane as a helical segment. Residues N48 and N57 are each glycosylated (N-linked (GlcNAc...) asparagine). 5 helical membrane passes run 70–90 (WVTL…SFLY), 99–119 (ILGS…LVKV), 124–144 (GPFF…SAVL), 162–182 (LFLS…LLSM), and 193–213 (LGYF…YLSL). An N-linked (GlcNAc...) asparagine glycan is attached at N225. S252 carries the phosphoserine modification. 5 helical membrane passes run 291-311 (WLTA…FPAI), 324-344 (WSQF…DWLG), 360-380 (LLPL…LCHV), 386-406 (LPIL…FAVS), and 432-452 (ALMT…SFLF).

It belongs to the SLC29A/ENT transporter (TC 2.A.57) family. In terms of processing, glycosylated. Highly expressed in skeletal muscle. Expressed in liver, lung, placenta, brain, heart, kidney and ovarian tissues. Expressed in testis at the blood-brain-barrier.

It is found in the apical cell membrane. Its subcellular location is the basolateral cell membrane. It catalyses the reaction inosine(in) = inosine(out). The catalysed reaction is adenosine(in) = adenosine(out). It carries out the reaction uridine(out) = uridine(in). The enzyme catalyses thymidine(in) = thymidine(out). It catalyses the reaction hypoxanthine(out) = hypoxanthine(in). The catalysed reaction is adenine(out) = adenine(in). It carries out the reaction cytidine(in) = cytidine(out). The enzyme catalyses thymine(out) = thymine(in). It catalyses the reaction uracil(in) = uracil(out). The catalysed reaction is guanine(out) = guanine(in). It carries out the reaction guanosine(in) = guanosine(out). In terms of biological role, bidirectional uniporter involved in the facilitative transport of nucleosides and nucleobases, and contributes to maintaining their cellular homeostasis. Functions as a Na(+)-independent, passive transporter. Involved in the transport of nucleosides such as inosine, adenosine, uridine, thymidine, cytidine and guanosine. Also able to transport purine nucleobases (hypoxanthine, adenine, guanine) and pyrimidine nucleobases (thymine, uracil). Involved in nucleoside transport at basolateral membrane of kidney cells, allowing liver absorption of nucleoside metabolites. Mediates apical nucleoside uptake into Sertoli cells, thereby regulating the transport of nucleosides in testis across the blood-testis-barrier. Mediates both the influx and efflux of hypoxanthine in skeletal muscle microvascular endothelial cells to control the amount of intracellular hypoxanthine available for xanthine oxidase-mediated ROS production. Non functional nucleoside transporter protein for adenosine or thymidine transport. Does not express on cell membrane. This chain is Equilibrative nucleoside transporter 2, found in Homo sapiens (Human).